Here is a 428-residue protein sequence, read N- to C-terminus: 3-phosphoshikimate 1-carboxyvinyltransferase (428 aa).

The 3-phosphoshikimate site is built by Lys-20, Ser-21, and Arg-25. Residue Lys-20 participates in phosphoenolpyruvate binding. Phosphoenolpyruvate is bound by residues Gly-92 and Arg-120. Residues Ser-166, Gln-168, Asp-314, and Lys-341 each contribute to the 3-phosphoshikimate site. Gln-168 lines the phosphoenolpyruvate pocket. Catalysis depends on Asp-314, which acts as the Proton acceptor. Positions 345 and 387 each coordinate phosphoenolpyruvate.

The protein belongs to the EPSP synthase family. In terms of assembly, monomer.

The protein localises to the cytoplasm. The catalysed reaction is 3-phosphoshikimate + phosphoenolpyruvate = 5-O-(1-carboxyvinyl)-3-phosphoshikimate + phosphate. It functions in the pathway metabolic intermediate biosynthesis; chorismate biosynthesis; chorismate from D-erythrose 4-phosphate and phosphoenolpyruvate: step 6/7. In terms of biological role, catalyzes the transfer of the enolpyruvyl moiety of phosphoenolpyruvate (PEP) to the 5-hydroxyl of shikimate-3-phosphate (S3P) to produce enolpyruvyl shikimate-3-phosphate and inorganic phosphate. This is 3-phosphoshikimate 1-carboxyvinyltransferase from Listeria monocytogenes serotype 4a (strain HCC23).